Reading from the N-terminus, the 465-residue chain is Gamma-aminobutyric acid receptor subunit gamma-1 (465 aa).

Positions 1–20 (MGSGKVFLFSPSLLWSQTRG) are cleaved as a signal peptide. The Extracellular portion of the chain corresponds to 21 to 273 (VRLIFLLLTL…FDLSRRMGYF (253 aa)). 2 N-linked (GlcNAc...) asparagine glycosylation sites follow: Asn-50 and Asn-127. Cys-188 and Cys-202 are disulfide-bonded. The N-linked (GlcNAc...) asparagine glycan is linked to Asn-245. Residues 274–294 (TIQTYIPCILTVVLSWVSFWI) traverse the membrane as a helical segment. The Cytoplasmic portion of the chain corresponds to 295-300 (NKDAVP). Residues 301-320 (ARTSLGITTVLTMTTLSTIA) traverse the membrane as a helical segment. Over 321–328 (RKSLPKVS) the chain is Extracellular. The chain crosses the membrane as a helical span at residues 329 to 349 (YVTAMDLFVSVCFIFVFAALM). The Cytoplasmic segment spans residues 350-444 (EYGTLHYFTS…RIAKIDSYSR (95 aa)). A helical transmembrane segment spans residues 445–465 (IFFPTAFALFNLVYWVGYLYL).

It belongs to the ligand-gated ion channel (TC 1.A.9) family. Gamma-aminobutyric acid receptor (TC 1.A.9.5) subfamily. GABRG1 sub-subfamily. In terms of assembly, heteropentamer, formed by a combination of alpha (GABRA1-6), beta (GABRB1-3), gamma (GABRG1-3), delta (GABRD), epsilon (GABRE), rho (GABRR1-3), pi (GABRP) and theta (GABRQ) chains, each subunit exhibiting distinct physiological and pharmacological properties. May be palmitoylated. Expressed in brain.

The protein localises to the postsynaptic cell membrane. It localises to the cell membrane. It carries out the reaction chloride(in) = chloride(out). In terms of biological role, gamma subunit of the heteropentameric ligand-gated chloride channel gated by gamma-aminobutyric acid (GABA), a major inhibitory neurotransmitter in the brain. GABA-gated chloride channels, also named GABA(A) receptors (GABAAR), consist of five subunits arranged around a central pore and contain GABA active binding site(s) located at the alpha and beta subunit interface(s). When activated by GABA, GABAARs selectively allow the flow of chloride anions across the cell membrane down their electrochemical gradient. Chloride influx into the postsynaptic neuron following GABAAR opening decreases the neuron ability to generate a new action potential, thereby reducing nerve transmission. This Rattus norvegicus (Rat) protein is Gamma-aminobutyric acid receptor subunit gamma-1.